The sequence spans 472 residues: PEP-dependent dihydroxyacetone kinase, phosphoryl donor subunit DhaM (472 aa).

The PTS EIIA type-4 domain occupies 1–135 (MVNLVIVSHS…NALEAKRVQL (135 aa)). His-9 functions as the Tele-phosphohistidine intermediate in the catalytic mechanism. The region spanning 156–243 (ARSVSVVIQN…ALAAENFGEP (88 aa)) is the HPr domain. His-170 (pros-phosphohistidine intermediate) is an active-site residue. The segment at 266-472 (PQPQDRISRE…DIPGKRVIRG (207 aa)) is PTS EI-like, N-terminal part. Residue His-432 is the Tele-phosphohistidine intermediate of the active site.

This sequence belongs to the PEP-utilizing enzyme family. Homodimer. The dihydroxyacetone kinase complex is composed of a homodimer of DhaM, a homodimer of DhaK and the subunit DhaL.

The enzyme catalyses dihydroxyacetone + phosphoenolpyruvate = dihydroxyacetone phosphate + pyruvate. In terms of biological role, component of the dihydroxyacetone kinase complex, which is responsible for the phosphoenolpyruvate (PEP)-dependent phosphorylation of dihydroxyacetone. DhaM serves as the phosphoryl donor. Is phosphorylated by phosphoenolpyruvate in an EI- and HPr-dependent reaction, and a phosphorelay system on histidine residues finally leads to phosphoryl transfer to DhaL and dihydroxyacetone. This is PEP-dependent dihydroxyacetone kinase, phosphoryl donor subunit DhaM from Klebsiella michiganensis (strain ATCC 8724 / DSM 4798 / JCM 20051 / NBRC 3318 / NRRL B-199 / KCTC 1686 / BUCSAV 143 / CCM 1901).